Reading from the N-terminus, the 387-residue chain is Gamma-butyrobetaine dioxygenase (387 aa).

Cys38, Cys40, Cys43, and His82 together coordinate Zn(2+). His202, Asp204, and His347 together coordinate Fe cation. Phosphoserine is present on Ser351.

The protein belongs to the gamma-BBH/TMLD family. Fe(2+) serves as cofactor. Requires L-ascorbate as cofactor.

It is found in the cytoplasm. It carries out the reaction 4-(trimethylamino)butanoate + 2-oxoglutarate + O2 = carnitine + succinate + CO2. The protein operates within amine and polyamine biosynthesis; carnitine biosynthesis. Catalyzes the formation of L-carnitine from gamma-butyrobetaine. The chain is Gamma-butyrobetaine dioxygenase (BBOX1) from Pongo abelii (Sumatran orangutan).